The chain runs to 480 residues: MPAMVEKGPEVSGKRRGRNTAASAASAAASAASAAASAAASAGTASASAAAAASAAAAPNNGQNKSLAAAAPNGNSGSNSWEEGSSGSSSDEEHGGGGMRVGPQYQAAVPDFDPAKLARRSQERDNLGMLVWSPNQSLSEAKLDEYIAIAKEKHGYNMEQALGMLFWHKHNIEKSLADLPNFTPFPDEWTVEDKVLFEQAFSFHGKTFHRIQQMLPDKSIASLVKFYYSWKKTRTKTSVMDRHARKQKREREESEDELEETNGSNPVDIEIDPNKESKKEVPPTETVPQVKKEKHSTQAKNRAKRKPPKGMFLSQEDVEAVSANATAATTVLRQLDMELVSIKRQIQNIKQTNSALKEKLDGGIEPYRLPEVIQKCNARWTTEEQLLAVQAIRKYGRDFQAISDVIGNKSVVQVKNFFVNYRRRFNIDEVLQEWEAEHGKDETNGPANQKPVKSPESSIKIPEEEDEAASVLDVRYASAS.

A disordered region spans residues 1–105 (MPAMVEKGPE…GGGMRVGPQY (105 aa)). 2 stretches are compositionally biased toward low complexity: residues 21–58 (AASA…AAAA) and 66–89 (SLAA…SGSS). Residues 72–251 (PNGNSGSNSW…RHARKQKRER (180 aa)) form an interaction with HDAC1 region. Positions 97-183 (GGMRVGPQYQ…KSLADLPNFT (87 aa)) constitute an ELM2 domain. K116 is covalently cross-linked (Glycyl lysine isopeptide (Lys-Gly) (interchain with G-Cter in SUMO2)). S121 carries the post-translational modification Phosphoserine. Positions 184 to 235 (PFPDEWTVEDKVLFEQAFSFHGKTFHRIQQMLPDKSIASLVKFYYSWKKTRT) constitute an SANT 1 domain. Residues 238–265 (SVMDRHARKQKREREESEDELEETNGSN) are a coiled coil. A disordered region spans residues 238–308 (SVMDRHARKQ…AKNRAKRKPP (71 aa)). A Phosphoserine modification is found at S254. Residues 272–282 (DPNKESKKEVP) show a composition bias toward basic and acidic residues. The tract at residues 290–378 (VKKEKHSTQA…LPEVIQKCNA (89 aa)) is interaction with KDM1A. K291 is covalently cross-linked (Glycyl lysine isopeptide (Lys-Gly) (interchain with G-Cter in SUMO2)). Residues 328-363 (ATTVLRQLDMELVSIKRQIQNIKQTNSALKEKLDGG) are a coiled coil. Residues 375 to 426 (KCNARWTTEEQLLAVQAIRKYGRDFQAISDVIGNKSVVQVKNFFVNYRRRFN) form the SANT 2 domain. The disordered stretch occupies residues 436–466 (AEHGKDETNGPANQKPVKSPESSIKIPEEED). S454 carries the post-translational modification Phosphoserine. Residue K460 forms a Glycyl lysine isopeptide (Lys-Gly) (interchain with G-Cter in SUMO2) linkage.

Belongs to the CoREST family. Component of a BHC histone deacetylase complex that contains HDAC1, HDAC2, HMG20B/BRAF35, KDM1A, RCOR1/CoREST and PHF21A/BHC80. The BHC complex may also contain ZMYM2, ZNF217, ZMYM3, GSE1 and GTF2I. Interacts with REST. Interacts with the SMARCE1/BAF57, suggesting that the BHC complex may recruit the ATP-dependent chromatin-remodeling SWI-SNF complex. Interacts directly with GFI1 and GFI1B in a RCOR/GFI/KDM1A/HDAC complex. Interacts with INMS1. Interacts with SOX2. In terms of tissue distribution, expressed in the external germinal layer (EGL) and internal granular layer (IGL) of the cerebellum and in Purkinje cells (at protein level).

The protein resides in the nucleus. Its function is as follows. Essential component of the BHC complex, a corepressor complex that represses transcription of neuron-specific genes in non-neuronal cells. The BHC complex is recruited at RE1/NRSE sites by REST and acts by deacetylating and demethylating specific sites on histones, thereby acting as a chromatin modifier. In the BHC complex, it serves as a molecular beacon for the recruitment of molecular machinery, including MeCP2 and SUV39H1, that imposes silencing across a chromosomal interval. Plays a central role in demethylation of Lys-4 of histone H3 by promoting demethylase activity of KDM1A on core histones and nucleosomal substrates. It also protects KDM1A from the proteasome. Component of a RCOR/GFI/KDM1A/HDAC complex that suppresses, via histone deacetylase (HDAC) recruitment, a number of genes implicated in multilineage blood cell development and controls hematopoietic differentiation. This Mus musculus (Mouse) protein is REST corepressor 1 (Rcor1).